Here is a 348-residue protein sequence, read N- to C-terminus: UPF0324 membrane protein BH02290 (348 aa).

Helical transmembrane passes span 13–35, 45–67, 74–96, 106–128, 135–157, 167–189, 196–218, 223–245, 257–275, 285–307, and 319–341; these read AFLN…AYGL, QAWL…CFTL, GITF…SISV, LLAS…GRLF, AMLV…APVI, SIAF…HPFL, YGVL…ASVS, QIAT…ALSI, LHTL…MLIR, LIPI…GLGV, and VILA…IQLN.

It belongs to the UPF0324 family.

The protein localises to the cell membrane. The chain is UPF0324 membrane protein BH02290 from Bartonella henselae (strain ATCC 49882 / DSM 28221 / CCUG 30454 / Houston 1) (Rochalimaea henselae).